The chain runs to 342 residues: Sideroflexin-5 (342 aa).

A compositionally biased stretch (low complexity) spans 1–24; it reads MADTATTASAASAAASASNASSDA. Positions 1–29 are disordered; sequence MADTATTASAASAAASASNASSDAPPFQL. A run of 4 helical transmembrane segments spans residues 105–125, 165–185, 256–276, and 289–309; these read IFMPFRMSGYIPFGTPIVVGL, FIQGYLGAVISAVSIAVGLNV, LTRVVLPMPILVLPPIVMSML, and LLPVHSLVCLAAFGLALPLAI.

It belongs to the sideroflexin family. Specifically expressed in the brain.

The protein resides in the mitochondrion inner membrane. The enzyme catalyses citrate(in) = citrate(out). Mitochondrial amino-acid transporter. Transports citrate. Does not act as a serine transporter: not able to mediate transport of serine into mitochondria. In brown adipose tissue, plays a role in the regulation of UCP1-dependent thermogenesis probably by supporting mitochondrial glycerol-3-phosphate utilization. This Rattus norvegicus (Rat) protein is Sideroflexin-5.